An 867-amino-acid polypeptide reads, in one-letter code: Alanine--tRNA ligase (867 aa).

Residues histidine 558, histidine 562, cysteine 660, and histidine 664 each coordinate Zn(2+).

This sequence belongs to the class-II aminoacyl-tRNA synthetase family. Requires Zn(2+) as cofactor.

It is found in the cytoplasm. The catalysed reaction is tRNA(Ala) + L-alanine + ATP = L-alanyl-tRNA(Ala) + AMP + diphosphate. Its function is as follows. Catalyzes the attachment of alanine to tRNA(Ala) in a two-step reaction: alanine is first activated by ATP to form Ala-AMP and then transferred to the acceptor end of tRNA(Ala). Also edits incorrectly charged Ser-tRNA(Ala) and Gly-tRNA(Ala) via its editing domain. This Fervidobacterium nodosum (strain ATCC 35602 / DSM 5306 / Rt17-B1) protein is Alanine--tRNA ligase.